We begin with the raw amino-acid sequence, 278 residues long: Cation-dependent mannose-6-phosphate receptor (278 aa).

The signal sequence occupies residues 1 to 21; it reads MFPLSGCWRTELLLLLLLAVA. Residues 22–188 are Lumenal-facing; that stretch reads VRESWQIEEK…ACSPEVSHLS (167 aa). Residues 31-182 enclose the MRH domain; that stretch reads KSCDLVGEKD…EMDSSLACSP (152 aa). A disulfide bridge connects residues cysteine 33 and cysteine 79. 5 N-linked (GlcNAc...) asparagine glycosylation sites follow: asparagine 58, asparagine 84, asparagine 95, asparagine 108, and asparagine 114. 2 cysteine pairs are disulfide-bonded: cysteine 133–cysteine 168 and cysteine 146–cysteine 180. The helical transmembrane segment at 189–209 threads the bilayer; the sequence is VGSILLVIFASLVAVYIIGGF. Residues 210–278 lie on the Cytoplasmic side of the membrane; sequence LYQRLVVGAK…EERDDHLLPM (69 aa). The tract at residues 256 to 278 is disordered; sequence YRGVGDDQLGEESEERDDHLLPM. The residue at position 268 (serine 268) is a Phosphoserine.

As to quaternary structure, homodimer. Binds GGA1, GGA2 and GGA3.

The protein localises to the lysosome membrane. In terms of biological role, transport of phosphorylated lysosomal enzymes from the Golgi complex and the cell surface to lysosomes. Lysosomal enzymes bearing phosphomannosyl residues bind specifically to mannose-6-phosphate receptors in the Golgi apparatus and the resulting receptor-ligand complex is transported to an acidic prelyosomal compartment where the low pH mediates the dissociation of the complex. This is Cation-dependent mannose-6-phosphate receptor (M6pr) from Rattus norvegicus (Rat).